The sequence spans 352 residues: RNA demethylase ALKBH5 (352 aa).

Positions 18–34 (RDKVFEYSNGEKRKYRE) are enriched in basic and acidic residues. The tract at residues 18 to 47 (RDKVFEYSNGEKRKYRESDDDESEYEERRD) is disordered. Tyrosine 107 is a catalytic residue. Residues asparagine 161, tyrosine 163, and histidine 172 each coordinate 2-oxoglutarate. 3 residues coordinate Fe cation: histidine 172, aspartate 174, and histidine 234. A disulfide bridge connects residues cysteine 198 and cysteine 235. 2-oxoglutarate-binding residues include histidine 234 and arginine 245. A disordered region spans residues 260-352 (LDSNSLSPSI…PTRRVKMRRH (93 aa)). A compositionally biased stretch (basic residues) spans 272 to 285 (PKRRHILKAKRSHR). 2 stretches are compositionally biased toward basic and acidic residues: residues 286-306 (KADPDAAHRPRVLEMDKELQR) and 315-343 (RHDDGSSENSWRRADDREPAARYTHDHAP).

This sequence belongs to the alkB family. In terms of assembly, monomer. Fe(2+) is required as a cofactor.

Its subcellular location is the nucleus speckle. It catalyses the reaction an N(6)-methyladenosine in mRNA + 2-oxoglutarate + O2 = an adenosine in mRNA + formaldehyde + succinate + CO2. Dioxygenase that specifically demethylates N(6)-methyladenosine (m6A) RNA, the most prevalent internal modification of messenger RNA (mRNA) in higher eukaryotes. Demethylates RNA by oxidative demethylation, which requires molecular oxygen, alpha-ketoglutarate and iron. Demethylation of m6A mRNA affects mRNA processing, translation and export. The protein is RNA demethylase ALKBH5 (alkbh5) of Danio rerio (Zebrafish).